We begin with the raw amino-acid sequence, 59 residues long: Lantibiotic lacticin 3147 A1 (59 aa).

A propeptide spanning residues 1–29 (MNKNEIETQPVTWLEEVSDQNFDEDVFGA) is cleaved from the precursor. Positions 30–31 (CS) form a cross-link, lanthionine (Cys-Ser). A 2,3-didehydrobutyrine mark is found at T32 and T34. S36 carries the post-translational modification 2,3-didehydroalanine (Ser). A cross-link (lanthionine (Ser-Cys)) is located at residues 38–48 (SDYWGNNGAWC). 2 cross-links (beta-methyllanthionine (Thr-Cys)) span residues 49–54 (TLTHEC) and 51–58 (THECMAWC).

Post-translationally, maturation of lantibiotics involves the enzymatic conversion of Thr, and Ser into dehydrated AA and the formation of thioether bonds with cysteine. This is followed by membrane translocation and cleavage of the modified precursor. It is not established whether the 2,3-didehydrobutyrines are the E- or Z-isomers. In the NMR model they were assumed to be the Z-isomer.

The protein resides in the secreted. Its function is as follows. Lanthionine-containing peptide antibiotic (lantibiotic) active on Gram-positive bacteria. The bactericidal activity of lantibiotics is based on depolarization of energized bacterial cytoplasmic membranes, initiated by the formation of aqueous transmembrane pores. When present individually lacticin 3147 A1 exhibits strong activity towards L.lactis strain AM2, weak activity towards L.lactis strain HP and no activity towards L.lactis strain IFPL359, but when combined with lacticin 3147 A2 it displays strong activity towards all three strains. This Lactococcus lactis subsp. lactis (Streptococcus lactis) protein is Lantibiotic lacticin 3147 A1.